Here is a 470-residue protein sequence, read N- to C-terminus: Cyclin-dependent kinase E-1 (470 aa).

The region spanning 25-333 is the Protein kinase domain; it reads YNLVGKIGEG…ASQALEHEYF (309 aa). Residues 31-39 and K55 each bind ATP; that span reads IGEGTYGLV. Phosphotyrosine is present on Y36. Catalysis depends on D154, which acts as the Proton acceptor. The tract at residues 428 to 470 is disordered; it reads LNPSVPLQQQRGMAQPHQQQQLRRKDPGMGMSGYAPPNKSRRL. The span at 432 to 448 shows a compositional bias: polar residues; that stretch reads VPLQQQRGMAQPHQQQQ.

It belongs to the protein kinase superfamily. CMGC Ser/Thr protein kinase family. CDC2/CDKX subfamily. As to quaternary structure, interacts with MED14, HDA19 and LUG. Interacts with KIN10. In terms of tissue distribution, expressed in roots, leaves and stems. Expressed in young dividing tissue, such as shoot and root tips, lateral root primordia, young leaves and flowers. Expressed in the inflorescence meristem, inflorescence stem and young flowers.

The protein resides in the nucleus. It carries out the reaction L-seryl-[protein] + ATP = O-phospho-L-seryl-[protein] + ADP + H(+). It catalyses the reaction L-threonyl-[protein] + ATP = O-phospho-L-threonyl-[protein] + ADP + H(+). The catalysed reaction is [DNA-directed RNA polymerase] + ATP = phospho-[DNA-directed RNA polymerase] + ADP + H(+). In terms of biological role, involved in cell differentiation. Required for the specification of stamen and carpel identities and for the proper termination of stem cells in the floral meristem. The sequence is that of Cyclin-dependent kinase E-1 (CDKE-1) from Arabidopsis thaliana (Mouse-ear cress).